We begin with the raw amino-acid sequence, 445 residues long: Rab GDP dissociation inhibitor beta (445 aa).

At Met1 the chain carries N-acetylmethionine. Position 57 is an N6-succinyllysine (Lys57). Lys112 carries the N6-acetyllysine modification. Phosphoserine is present on Ser130. N6-acetyllysine is present on Lys269. Residue Ser382 is modified to Phosphoserine.

Belongs to the Rab GDI family. In terms of assembly, interacts with RHOH. Interacts with the GDP-bound inactive forms of RAB3A, RAB3B, RAB3C, RAB5A, RAB5B, RAB5C, RAB8A, RAB8B, RAB10, RAB12, RAB35, and RAB43; binds RAB3D to a lesser extent. Interacts with DZIP1; this interaction negatively regulates the interaction of GDI2 with GDP-bound RAB8A. As to expression, ubiquitously expressed.

It is found in the cytoplasm. The protein localises to the membrane. Its subcellular location is the golgi apparatus. It localises to the trans-Golgi network. Functionally, GDP-dissociation inhibitor preventing the GDP to GTP exchange of most Rab proteins. By keeping these small GTPases in their inactive GDP-bound form regulates intracellular membrane trafficking. Negatively regulates protein transport to the cilium and ciliogenesis through the inhibition of RAB8A. The chain is Rab GDP dissociation inhibitor beta (GDI2) from Bos taurus (Bovine).